The chain runs to 677 residues: DNA polymerase epsilon subunit B (677 aa).

This sequence belongs to the DNA polymerase epsilon subunit B family. In terms of assembly, heterotetramer. Consists of four subunits: POL2, DPB2, DPB3 and DPB4.

The protein localises to the nucleus. Functionally, as accessory component of the DNA polymerase epsilon (DNA polymerase II) participates in chromosomal DNA replication. The protein is DNA polymerase epsilon subunit B (DPB2) of Eremothecium gossypii (strain ATCC 10895 / CBS 109.51 / FGSC 9923 / NRRL Y-1056) (Yeast).